The sequence spans 511 residues: Early growth response protein 1 (511 aa).

2 disordered regions span residues 133–169 (ASIP…LSCS) and 291–312 (PSRM…RPYA). Residues 137–169 (SSTSQATHPSSSSTSSIPSSSSSSTSSASLSCS) show a composition bias toward low complexity. 3 C2H2-type zinc fingers span residues 311-335 (YACP…IRIH), 341-363 (FQCR…IRTH), and 369-391 (FACE…TKIH). The interval 384 to 406 (RKRHTKIHMRQKDKKAEKGATAA) is disordered. A compositionally biased stretch (basic residues) spans 386-396 (RHTKIHMRQKD).

It belongs to the EGR C2H2-type zinc-finger protein family. Detected in muscle and brain.

The protein localises to the nucleus. It is found in the cytoplasm. Transcriptional regulator. Recognizes and binds to the DNA sequence 5'-GCG(T/G)GGGCG-3'(EGR-site) in the promoter region of target genes. Binds double-stranded target DNA, irrespective of the cytosine methylation status. Regulates the transcription of numerous target genes, and thereby plays an important role in regulating the response to growth factors, DNA damage, and ischemia. Plays a role in the regulation of cell survival, proliferation and cell death. Mediates responses to ischemia and hypoxia; regulates the expression of proteins that are involved in inflammatory processes. Plays a role in regulating the expression of circadian clock genes. Plays a role in the organization of Muller glia cells in the inner and outer plexiform layers of the retina. This Danio rerio (Zebrafish) protein is Early growth response protein 1 (egr1).